The primary structure comprises 225 residues: tRNA (guanine-N(1)-)-methyltransferase (225 aa).

Residues Gly112 and 132–137 each bind S-adenosyl-L-methionine; that span reads IGDYVL.

Belongs to the RNA methyltransferase TrmD family. As to quaternary structure, homodimer.

The protein localises to the cytoplasm. It carries out the reaction guanosine(37) in tRNA + S-adenosyl-L-methionine = N(1)-methylguanosine(37) in tRNA + S-adenosyl-L-homocysteine + H(+). Functionally, specifically methylates guanosine-37 in various tRNAs. The chain is tRNA (guanine-N(1)-)-methyltransferase from Porphyromonas gingivalis (strain ATCC 33277 / DSM 20709 / CIP 103683 / JCM 12257 / NCTC 11834 / 2561).